Consider the following 431-residue polypeptide: MSYHELQHFTLLMTQIGFPRPISIDTFRKPDFFLVAEILHYITTVVAPSNAIAMDIATQEDRVYFITTVVNVLQTTLHLKLDSKKIYAAGPEAVRELRKIVQEVATYIGAAATSTDKGTSSAASVDLTLHSNALCVASSKIVEASTKLLTQLRLHVDDLYQRMQQAMSSQPDAASLSAAVQQRIKNLAAECNTLQEEVTTNKREKAKLEEQITQKKQSITHTMDRLDAIRSTKPPFLAELEALEADLSKLHLEYARKFRSLLFLEGQLRANDVREQQRVIEREKNLRALQENALKEELNNMYGGVDARSSTSHLDDEFVETPMPHVMDMHQPKPVQDFVPSKAAPINTNAEIPDDESYSYSYEEEEEEEQVISSANPMQQARAPETHSNGEKHRGLDELSHKSNENADNEEYSYEYSDIGGEELDPDNIEF.

Residues 177–218 (SAAVQQRIKNLAAECNTLQEEVTTNKREKAKLEEQITQKKQS) are a coiled coil. The segment at 346 to 431 (INTNAEIPDD…EELDPDNIEF (86 aa)) is disordered. Acidic residues predominate over residues 352 to 370 (IPDDESYSYSYEEEEEEEQ). A compositionally biased stretch (basic and acidic residues) spans 384-405 (PETHSNGEKHRGLDELSHKSNE). The span at 420-431 (GGEELDPDNIEF) shows a compositional bias: acidic residues.

The protein belongs to the CLUAP1 family.

The protein localises to the cell projection. The protein resides in the cilium. Its subcellular location is the flagellum. It is found in the cytoplasm. It localises to the cytoskeleton. The protein localises to the flagellum axoneme. The protein resides in the flagellum basal body. In terms of biological role, component of the intraflagellar transport complex B (IFT-B) involved in flagellar assembly. This chain is Intraflagellar transport protein 38, found in Giardia intestinalis (strain ATCC 50803 / WB clone C6) (Giardia lamblia).